The chain runs to 610 residues: Elongation factor 4 (610 aa).

Residues Glu-11–Thr-193 enclose the tr-type G domain. Residues Asp-23–Thr-28 and Asn-140–Asp-143 contribute to the GTP site.

Belongs to the TRAFAC class translation factor GTPase superfamily. Classic translation factor GTPase family. LepA subfamily.

Its subcellular location is the cell membrane. It carries out the reaction GTP + H2O = GDP + phosphate + H(+). Required for accurate and efficient protein synthesis under certain stress conditions. May act as a fidelity factor of the translation reaction, by catalyzing a one-codon backward translocation of tRNAs on improperly translocated ribosomes. Back-translocation proceeds from a post-translocation (POST) complex to a pre-translocation (PRE) complex, thus giving elongation factor G a second chance to translocate the tRNAs correctly. Binds to ribosomes in a GTP-dependent manner. This is Elongation factor 4 from Streptococcus pyogenes serotype M1.